Here is a 778-residue protein sequence, read N- to C-terminus: NAD-dependent deacetylase sir2B (778 aa).

ANK repeat units lie at residues 83 to 112 (LNWT…EISI), 114 to 142 (RYTA…VPNG), 148 to 178 (DMET…SMNS), 191 to 221 (HGVS…DINS), 225 to 255 (DNST…ELMN), 260 to 289 (YGNS…KIII), 317 to 354 (DGST…QVNG), 358 to 390 (GNAT…DPTI), and 394 to 423 (YGWT…LTNS). Residues 438–458 (SSTSTSSSSSSSSSSSSSSSS) form a disordered region. In terms of domain architecture, Deacetylase sirtuin-type spans 465 to 778 (KEELKLKGIE…DYFNTLFNSF (314 aa)). His608 (proton acceptor) is an active-site residue. The Zn(2+) site is built by Cys616, Cys619, Cys642, and Cys647. Residues 727–746 (KLKQQQENESGESSNDNDNN) form a disordered region. The span at 733-746 (ENESGESSNDNDNN) shows a compositional bias: low complexity.

This sequence belongs to the sirtuin family. The cofactor is Zn(2+).

It carries out the reaction N(6)-acetyl-L-lysyl-[protein] + NAD(+) + H2O = 2''-O-acetyl-ADP-D-ribose + nicotinamide + L-lysyl-[protein]. Its function is as follows. NAD-dependent deacetylase, which plays an important role in the regulation of transcriptional repression. The chain is NAD-dependent deacetylase sir2B (sir2B) from Dictyostelium discoideum (Social amoeba).